The following is a 208-amino-acid chain: Large ribosomal subunit protein uL4 (208 aa).

A disordered region spans residues 44–79; sequence QRQGTHKSKERSEISGSTRKLGRQKGGGGARRGDIN.

The protein belongs to the universal ribosomal protein uL4 family. As to quaternary structure, part of the 50S ribosomal subunit.

Functionally, one of the primary rRNA binding proteins, this protein initially binds near the 5'-end of the 23S rRNA. It is important during the early stages of 50S assembly. It makes multiple contacts with different domains of the 23S rRNA in the assembled 50S subunit and ribosome. Its function is as follows. Forms part of the polypeptide exit tunnel. This Phocaeicola vulgatus (strain ATCC 8482 / DSM 1447 / JCM 5826 / CCUG 4940 / NBRC 14291 / NCTC 11154) (Bacteroides vulgatus) protein is Large ribosomal subunit protein uL4.